Consider the following 136-residue polypeptide: Nucleoside diphosphate kinase (136 aa).

ATP is bound by residues K10, F58, R86, T92, R104, and N114. H117 (pros-phosphohistidine intermediate) is an active-site residue.

It belongs to the NDK family. Homotetramer. The cofactor is Mg(2+).

It is found in the cytoplasm. The enzyme catalyses a 2'-deoxyribonucleoside 5'-diphosphate + ATP = a 2'-deoxyribonucleoside 5'-triphosphate + ADP. It carries out the reaction a ribonucleoside 5'-diphosphate + ATP = a ribonucleoside 5'-triphosphate + ADP. In terms of biological role, major role in the synthesis of nucleoside triphosphates other than ATP. The ATP gamma phosphate is transferred to the NDP beta phosphate via a ping-pong mechanism, using a phosphorylated active-site intermediate. The polypeptide is Nucleoside diphosphate kinase (Mycobacterium sp. (strain MCS)).